The chain runs to 379 residues: MSKSALLVLEDGTVFRGVSIGADGISVGEVVFNTSMTGYQEILTDPSYSQQIVTLTYPHIGNTGTNSEDEESTAIHAQGLVIRDLPLIASNFRSEQSLSDYLKSQNIVGIADIDTRKLTRILREKGAQNGCIMAGDNLDEALALAKAKEFPGLKGMDLAKVVSTKEAYAWKQGSWTLEGGLPEAKADSELPYHVVAYDFGAKRNILRMLVDRGCRLTVVPAQTSAEDVLALNPDGVFLSNGPGDPEPCTYAIEATRVFLEKNIPVFGICLGHQILALASGAKTVKMKFGHHGANHPVKDLDRGVVMITSQNHGFAADEATLPDNLRATHKSLFDGSLQGIHRTDKPAFSFQGHPEASPGPHDAAPLFDHFIELIKQFRA.

Residues 1-189 (MSKSALLVLE…GLPEAKADSE (189 aa)) are CPSase. Serine 47, glycine 241, and glycine 243 together coordinate L-glutamine. One can recognise a Glutamine amidotransferase type-1 domain in the interval 193 to 379 (HVVAYDFGAK…FIELIKQFRA (187 aa)). Cysteine 269 (nucleophile) is an active-site residue. L-glutamine contacts are provided by leucine 270, glutamine 273, asparagine 311, glycine 313, and phenylalanine 314. Active-site residues include histidine 353 and glutamate 355.

The protein belongs to the CarA family. Composed of two chains; the small (or glutamine) chain promotes the hydrolysis of glutamine to ammonia, which is used by the large (or ammonia) chain to synthesize carbamoyl phosphate. Tetramer of heterodimers (alpha,beta)4.

It carries out the reaction hydrogencarbonate + L-glutamine + 2 ATP + H2O = carbamoyl phosphate + L-glutamate + 2 ADP + phosphate + 2 H(+). It catalyses the reaction L-glutamine + H2O = L-glutamate + NH4(+). Its pathway is amino-acid biosynthesis; L-arginine biosynthesis; carbamoyl phosphate from bicarbonate: step 1/1. It functions in the pathway pyrimidine metabolism; UMP biosynthesis via de novo pathway; (S)-dihydroorotate from bicarbonate: step 1/3. Functionally, small subunit of the glutamine-dependent carbamoyl phosphate synthetase (CPSase). CPSase catalyzes the formation of carbamoyl phosphate from the ammonia moiety of glutamine, carbonate, and phosphate donated by ATP, constituting the first step of 2 biosynthetic pathways, one leading to arginine and/or urea and the other to pyrimidine nucleotides. The small subunit (glutamine amidotransferase) binds and cleaves glutamine to supply the large subunit with the substrate ammonia. The protein is Carbamoyl phosphate synthase small chain of Vibrio cholerae serotype O1 (strain ATCC 39315 / El Tor Inaba N16961).